The chain runs to 62 residues: Small ribosomal subunit protein bS21 (62 aa).

This sequence belongs to the bacterial ribosomal protein bS21 family.

In Mycoplasma genitalium (strain ATCC 33530 / DSM 19775 / NCTC 10195 / G37) (Mycoplasmoides genitalium), this protein is Small ribosomal subunit protein bS21 (rpsU).